A 447-amino-acid chain; its full sequence is MLKFIFMIMFIFFLFFKKNIYWMVQNLIFLATCLFMIKISSNYYFCDISYYFGMDMISYGLILLSFWICGLMLMASEGVVRYNNYVNLFLFMIVFLLLMLIFTFSSMSMFMFYLFFESSLIPTLFLILGWGYQPERLQAGIYLLFYTLLASLPLLIGIFYIKNDNYTMNFIMLSYKNLYNLDFLYLCMIFAFLVKMPMFLVHLWLPKAHVEAPVSGSMILAGVLLKLGGYGLLRVFSLMQVLGMKFNYIWISISLIGGVLVSLICLWQMDLKALIAYSSVAHMGIVLSGLMTMTYWGLNGSYTLMIAHGLCSSGLFCLANISYERMGSRSLLINKGMLNFMPSLSLWWFLLCSGNMAAPPTLNLLGEISLLNSIVSWSWLTMISLAFLSFFSAAYTLYLFAYSQHGKIYSGVYFFSSGTTREFLVLMLHWLPLNLLIMKSNFCMLWI.

The next 13 membrane-spanning stretches (helical) occupy residues 28-48 (IFLA…FCDI), 56-76 (MISY…LMAS), 85-105 (YVNL…FTFS), 110-130 (FMFY…ILGW), 141-161 (IYLL…IFYI), 183-203 (FLYL…LVHL), 213-233 (PVSG…YGLL), 246-266 (FNYI…LICL), 273-293 (ALIA…LMTM), 301-321 (SYTL…LANI), 343-365 (SLSL…LNLL), 380-400 (LTMI…LYLF), and 409-431 (YSGV…LHWL).

It belongs to the complex I subunit 4 family.

The protein localises to the mitochondrion membrane. It catalyses the reaction a ubiquinone + NADH + 5 H(+)(in) = a ubiquinol + NAD(+) + 4 H(+)(out). Core subunit of the mitochondrial membrane respiratory chain NADH dehydrogenase (Complex I) that is believed to belong to the minimal assembly required for catalysis. Complex I functions in the transfer of electrons from NADH to the respiratory chain. The immediate electron acceptor for the enzyme is believed to be ubiquinone. In Aedes aegypti (Yellowfever mosquito), this protein is NADH-ubiquinone oxidoreductase chain 4.